We begin with the raw amino-acid sequence, 139 residues long: Putative pre-16S rRNA nuclease (139 aa).

The protein belongs to the YqgF nuclease family.

Its subcellular location is the cytoplasm. Its function is as follows. Could be a nuclease involved in processing of the 5'-end of pre-16S rRNA. The sequence is that of Putative pre-16S rRNA nuclease from Bacillus licheniformis (strain ATCC 14580 / DSM 13 / JCM 2505 / CCUG 7422 / NBRC 12200 / NCIMB 9375 / NCTC 10341 / NRRL NRS-1264 / Gibson 46).